The following is a 362-amino-acid chain: Endolytic peptidoglycan transglycosylase RlpA (362 aa).

A signal peptide spans 1-17 (MRKQWLGICIAAGMLAA). Residue Cys-18 is the site of N-palmitoyl cysteine attachment. Residue Cys-18 is the site of S-diacylglycerol cysteine attachment. The segment at 198 to 276 (PDLSGGAGTS…PSTTPATSPA (79 aa)) is disordered. The span at 262–276 (PVVTAPSTTPATSPA) shows a compositional bias: low complexity. In terms of domain architecture, SPOR spans 285-361 (QSASGNFMVQ…AQLQSFITTA (77 aa)).

Belongs to the RlpA family.

Its subcellular location is the cell membrane. Functionally, lytic transglycosylase with a strong preference for naked glycan strands that lack stem peptides. The polypeptide is Endolytic peptidoglycan transglycosylase RlpA (Escherichia coli O157:H7).